The chain runs to 228 residues: Histidine/lysine/arginine/ornithine transport system permease protein HisQ (228 aa).

Topologically, residues 1–12 (MLYGFSGVILQG) are periplasmic. The helical transmembrane segment at 13-33 (AIVTLELALSSVVLAVLIGLV) threads the bilayer. An ABC transmembrane type-1 domain is found at 13–212 (AIVTLELALS…VFTTVSNGVL (200 aa)). Residues 34–58 (GAGAKLSQNRVTGLIFEGYTTLIRG) lie on the Cytoplasmic side of the membrane. The chain crosses the membrane as a helical span at residues 59–79 (VPDLVLMLLIFYGLQIALNVV). The Periplasmic portion of the chain corresponds to 80-87 (TDSLGIDQ). A helical membrane pass occupies residues 88–108 (IDIDPMVAGIITLGFIYGAYF). The Cytoplasmic segment spans residues 109-152 (TETFRGAFMAVPKGHIEAATAFGFTHGQTFRRIMFPAMMRYALP). Residues 153–173 (GIGNNWQVILKATALVSLLGL) traverse the membrane as a helical segment. At 174-194 (EDVVKATQLAGKSTWEPFYFA) the chain is on the periplasmic side. The chain crosses the membrane as a helical span at residues 195–215 (VVCGLIYLVFTTVSNGVLLLL). The Cytoplasmic segment spans residues 216-228 (ERRYSVGVKRADL).

It belongs to the binding-protein-dependent transport system permease family. HisMQ subfamily. The HisPMQJ complex is composed of two ATP-binding proteins (HisP), two transmembrane proteins (HisM and HisQ) and a solute-binding protein (HisJ). The HisPMQ-ArgT complex is composed of two ATP-binding proteins (HisP), two transmembrane proteins (HisM and HisQ) and a solute-binding protein (ArgT).

It localises to the cell inner membrane. In terms of biological role, part of the ABC transporter complex HisPMQJ involved in histidine transport. Is also part of the ABC transporter complex HisPMQ-ArgT involved in lysine/arginine/ornithine transport. Probably responsible for the translocation of the substrate across the membrane. In Salmonella typhi, this protein is Histidine/lysine/arginine/ornithine transport system permease protein HisQ (hisQ).